The chain runs to 341 residues: tRNA N6-adenosine threonylcarbamoyltransferase (341 aa).

Fe cation contacts are provided by histidine 111 and histidine 115. Residues 134-138, aspartate 167, glycine 180, and asparagine 276 contribute to the substrate site; that span reads LVSGG. Aspartate 304 contributes to the Fe cation binding site.

The protein belongs to the KAE1 / TsaD family. Fe(2+) is required as a cofactor.

The protein localises to the cytoplasm. It carries out the reaction L-threonylcarbamoyladenylate + adenosine(37) in tRNA = N(6)-L-threonylcarbamoyladenosine(37) in tRNA + AMP + H(+). Functionally, required for the formation of a threonylcarbamoyl group on adenosine at position 37 (t(6)A37) in tRNAs that read codons beginning with adenine. Is involved in the transfer of the threonylcarbamoyl moiety of threonylcarbamoyl-AMP (TC-AMP) to the N6 group of A37, together with TsaE and TsaB. TsaD likely plays a direct catalytic role in this reaction. The sequence is that of tRNA N6-adenosine threonylcarbamoyltransferase from Pseudomonas fluorescens (strain SBW25).